The chain runs to 130 residues: Immunoglobulin kappa chain variable 9-120 (130 aa).

Positions 1–22 (MDMRAPAQIFGFLLLLFQGTRC) are cleaved as a signal peptide. The interval 23 to 45 (DIQMTQSPSSLSASLGERVSLTC) is framework-1. Residues Cys-45 and Cys-110 are joined by a disulfide bond. Residues 46–56 (RASQDIGSSLN) form a complementarity-determining-1 region. The tract at residues 57 to 71 (WLQQEPDGTIKRLIY) is framework-2. The segment at 72-78 (ATSSLDS) is complementarity-determining-2. The framework-3 stretch occupies residues 79 to 110 (GVPKRFSGSRSGSDYSLTISSLESEDFVDYYC). The complementarity-determining-3 stretch occupies residues 111–119 (LQYASSPWT). Positions 120–129 (FGGGTKLEIK) are framework-4.

In Mus musculus (Mouse), this protein is Immunoglobulin kappa chain variable 9-120.